The following is a 367-amino-acid chain: DNA polymerase IV (367 aa).

Residues 14 to 198 form the UmuC domain; it reads IIHIDMDAFF…LPIEKFHGVG (185 aa). Mg(2+)-binding residues include Asp-18 and Asp-116. Residue Glu-117 is part of the active site.

It belongs to the DNA polymerase type-Y family. Monomer. Mg(2+) is required as a cofactor.

Its subcellular location is the cytoplasm. It carries out the reaction DNA(n) + a 2'-deoxyribonucleoside 5'-triphosphate = DNA(n+1) + diphosphate. Functionally, poorly processive, error-prone DNA polymerase involved in untargeted mutagenesis. Copies undamaged DNA at stalled replication forks, which arise in vivo from mismatched or misaligned primer ends. These misaligned primers can be extended by PolIV. Exhibits no 3'-5' exonuclease (proofreading) activity. May be involved in translesional synthesis, in conjunction with the beta clamp from PolIII. This is DNA polymerase IV from Streptococcus thermophilus (strain CNRZ 1066).